Consider the following 433-residue polypeptide: Enolase 2 (433 aa).

The disordered stretch occupies residues 34 to 56 (RGMVPSGASTGEHEAVELRDGDK). Over residues 44–56 (GEHEAVELRDGDK) the composition is skewed to basic and acidic residues. Q163 serves as a coordination point for (2R)-2-phosphoglycerate. Residue E205 is the Proton donor of the active site. Mg(2+) is bound by residues D243, E290, and D317. Residues K342, R371, S372, and K393 each coordinate (2R)-2-phosphoglycerate. The active-site Proton acceptor is the K342.

The protein belongs to the enolase family. Requires Mg(2+) as cofactor.

It localises to the cytoplasm. The protein resides in the secreted. Its subcellular location is the cell surface. The enzyme catalyses (2R)-2-phosphoglycerate = phosphoenolpyruvate + H2O. The protein operates within carbohydrate degradation; glycolysis; pyruvate from D-glyceraldehyde 3-phosphate: step 4/5. Catalyzes the reversible conversion of 2-phosphoglycerate (2-PG) into phosphoenolpyruvate (PEP). It is essential for the degradation of carbohydrates via glycolysis. The polypeptide is Enolase 2 (Lactococcus lactis subsp. cremoris (strain SK11)).